Consider the following 494-residue polypeptide: WD repeat-containing protein 37 (494 aa).

Composition is skewed to polar residues over residues 1–13 (MPTE…TARQ) and 22–31 (SLSIRRTNSS). The interval 1–50 (MPTESASCSTARQTKQKRKSHSLSIRRTNSSEQERTGLPRDMLEGQDSKL) is disordered. Residues 32–47 (EQERTGLPRDMLEGQD) are compositionally biased toward basic and acidic residues. WD repeat units lie at residues 154 to 194 (GHRD…CLVK) and 197 to 236 (GHVG…PTPQ). A disordered region spans residues 237-265 (PVADTSISGEDEVECSDKDEPDLDGDVSS). The span at 245–263 (GEDEVECSDKDEPDLDGDV) shows a compositional bias: acidic residues. WD repeat units follow at residues 279–318 (SHQG…LVHS), 321–360 (GHDQ…IHSV), 365–403 (GHTD…SPIA), 406–445 (RTDS…LARL), and 452–493 (GHRR…LLQE).

In terms of assembly, forms homodimers. Interacts with PACS1. Interacts with PACS2.

Its subcellular location is the cytoplasm. The protein localises to the nucleus. Required for normal ER Ca2+ handling in lymphocytes. Together with PACS1, it plays an essential role in stabilizing peripheral lymphocyte populations. This is WD repeat-containing protein 37 (WDR37) from Homo sapiens (Human).